The chain runs to 119 residues: uncharacterized protein (119 aa).

2 helical membrane passes run 7 to 27 and 32 to 52; these read ILHNALYYVLIIIYEYVLLLV and YFFEFLFLFLPLWLVFFFLML.

The protein localises to the membrane. This is an uncharacterized protein from Saccharomyces cerevisiae (strain ATCC 204508 / S288c) (Baker's yeast).